The sequence spans 109 residues: Thiosulfate sulfurtransferase GlpE (109 aa).

Residues 17–105 (HQQTAVLVDI…WHRHFPAEVA (89 aa)) form the Rhodanese domain. Cys65 functions as the Cysteine persulfide intermediate in the catalytic mechanism.

It belongs to the GlpE family.

The protein resides in the cytoplasm. The catalysed reaction is thiosulfate + hydrogen cyanide = thiocyanate + sulfite + 2 H(+). The enzyme catalyses thiosulfate + [thioredoxin]-dithiol = [thioredoxin]-disulfide + hydrogen sulfide + sulfite + 2 H(+). Its function is as follows. Transferase that catalyzes the transfer of sulfur from thiosulfate to thiophilic acceptors such as cyanide or dithiols. May function in a CysM-independent thiosulfate assimilation pathway by catalyzing the conversion of thiosulfate to sulfite, which can then be used for L-cysteine biosynthesis. This chain is Thiosulfate sulfurtransferase GlpE, found in Klebsiella pneumoniae subsp. pneumoniae (strain ATCC 700721 / MGH 78578).